A 47-amino-acid polypeptide reads, in one-letter code: Delta-actitoxin-Ael1a (47 aa).

3 disulfide bridges follow: C4-C44, C6-C34, and C27-C45.

It belongs to the sea anemone sodium channel inhibitory toxin family. Type I subfamily. As to expression, expressed in ectodermal glands. Not expressed in nematocytes.

Its subcellular location is the secreted. Functionally, binds specifically to voltage-gated sodium channels (Nav), thereby delaying their inactivation during signal transduction. It strongly stimulates mammalian cardiac muscle contraction. Paralyzes the shore crab (C.maenas) by tetanic contractions after intramuscular injection. This is Delta-actitoxin-Ael1a from Anthopleura elegantissima (Green aggregating anemone).